Reading from the N-terminus, the 449-residue chain is Phosphoglucosamine mutase (449 aa).

Ser-102 acts as the Phosphoserine intermediate in catalysis. The Mg(2+) site is built by Ser-102, Asp-241, Asp-243, and Asp-245. A Phosphoserine modification is found at Ser-102.

Belongs to the phosphohexose mutase family. Requires Mg(2+) as cofactor. In terms of processing, activated by phosphorylation.

It catalyses the reaction alpha-D-glucosamine 1-phosphate = D-glucosamine 6-phosphate. Its function is as follows. Catalyzes the conversion of glucosamine-6-phosphate to glucosamine-1-phosphate. This chain is Phosphoglucosamine mutase, found in Roseobacter denitrificans (strain ATCC 33942 / OCh 114) (Erythrobacter sp. (strain OCh 114)).